A 99-amino-acid polypeptide reads, in one-letter code: Translation initiation factor 1A (99 aa).

Positions 11-84 constitute an S1-like domain; sequence RRVRTPRRGE…EKADIVWRYT (74 aa).

This sequence belongs to the eIF-1A family.

In terms of biological role, seems to be required for maximal rate of protein biosynthesis. Enhances ribosome dissociation into subunits and stabilizes the binding of the initiator Met-tRNA(I) to 40 S ribosomal subunits. The sequence is that of Translation initiation factor 1A (eIF1A) from Methanothermobacter thermautotrophicus (strain ATCC 29096 / DSM 1053 / JCM 10044 / NBRC 100330 / Delta H) (Methanobacterium thermoautotrophicum).